The sequence spans 173 residues: Alpha-crystallin A chain (173 aa).

Position 1 is an N-acetylmethionine (M1). Positions 1-63 are required for complex formation with BFSP1 and BFSP2; that stretch reads MDVTIQHPWF…RTVLDSGISE (63 aa). The residue at position 6 (Q6) is a Deamidated glutamine; partial. The residue at position 45 (S45) is a Phosphoserine. At Q50 the chain carries Deamidated glutamine; partial. Residues 52–162 enclose the sHSP domain; it reads LFRTVLDSGI…GPSERAIPVS (111 aa). N6-acetyllysine occurs at positions 70 and 99. 3 residues coordinate Zn(2+): H100, E102, and H107. The tract at residues 145–173 is disordered; it reads KVASGLDAGPSERAIPVSREEKPSSAPSS. S162 carries O-linked (GlcNAc) serine glycosylation.

It belongs to the small heat shock protein (HSP20) family. Heteromer composed of three CRYAA and one CRYAB subunits. Zinc coordination is achieved at least by His-100, Glu-102 and His-107. His-100 and Glu-102 come from the same molecule within the oligomer, while His-107 residue is provided by another molecule. Inter-subunit bridging via zinc ions enhances stability, which is crucial as there is no protein turn over in the lens. Can also form homodimers and homotetramers (dimers of dimers) which serve as the building blocks of homooligomers. Part of a complex required for lens intermediate filament formation composed of BFSP1, BFSP2 and CRYAA. In terms of processing, acetylation at Lys-70 may increase chaperone activity. Post-translationally, undergoes age-dependent proteolytical cleavage at the C-terminus.

It localises to the cytoplasm. The protein localises to the nucleus. Functionally, contributes to the transparency and refractive index of the lens. Acts as a chaperone, preventing aggregation of various proteins under a wide range of stress conditions. Required for the correct formation of lens intermediate filaments as part of a complex composed of BFSP1, BFSP2 and CRYAA. The sequence is that of Alpha-crystallin A chain (CRYAA) from Erinaceus europaeus (Western European hedgehog).